Consider the following 616-residue polypeptide: Dihydroxy-acid dehydratase (616 aa).

Position 81 (Asp81) interacts with Mg(2+). Cys122 is a [2Fe-2S] cluster binding site. Asp123 and Lys124 together coordinate Mg(2+). N6-carboxylysine is present on Lys124. Cys195 contacts [2Fe-2S] cluster. Residue Glu491 participates in Mg(2+) binding. Residue Ser517 is the Proton acceptor of the active site.

It belongs to the IlvD/Edd family. As to quaternary structure, homodimer. [2Fe-2S] cluster is required as a cofactor. Requires Mg(2+) as cofactor.

It carries out the reaction (2R)-2,3-dihydroxy-3-methylbutanoate = 3-methyl-2-oxobutanoate + H2O. The enzyme catalyses (2R,3R)-2,3-dihydroxy-3-methylpentanoate = (S)-3-methyl-2-oxopentanoate + H2O. Its pathway is amino-acid biosynthesis; L-isoleucine biosynthesis; L-isoleucine from 2-oxobutanoate: step 3/4. The protein operates within amino-acid biosynthesis; L-valine biosynthesis; L-valine from pyruvate: step 3/4. In terms of biological role, functions in the biosynthesis of branched-chain amino acids. Catalyzes the dehydration of (2R,3R)-2,3-dihydroxy-3-methylpentanoate (2,3-dihydroxy-3-methylvalerate) into 2-oxo-3-methylpentanoate (2-oxo-3-methylvalerate) and of (2R)-2,3-dihydroxy-3-methylbutanoate (2,3-dihydroxyisovalerate) into 2-oxo-3-methylbutanoate (2-oxoisovalerate), the penultimate precursor to L-isoleucine and L-valine, respectively. This chain is Dihydroxy-acid dehydratase, found in Shewanella loihica (strain ATCC BAA-1088 / PV-4).